A 536-amino-acid chain; its full sequence is Anthranilate synthase component 1 2 (536 aa).

L-tryptophan is bound by residues S59 and 299–301 (PYM). 334-335 (GT) contributes to the chorismate binding site. E361 provides a ligand contact to Mg(2+). Chorismate contacts are provided by residues Y449, R469, 487–489 (GAG), and G489. E502 contributes to the Mg(2+) binding site.

The protein belongs to the anthranilate synthase component I family. Tetramer of two components I and two components II. Mg(2+) is required as a cofactor.

The catalysed reaction is chorismate + L-glutamine = anthranilate + pyruvate + L-glutamate + H(+). Its pathway is amino-acid biosynthesis; L-tryptophan biosynthesis; L-tryptophan from chorismate: step 1/5. The sequence is that of Anthranilate synthase component 1 2 (trpE2) from Haloarcula marismortui (strain ATCC 43049 / DSM 3752 / JCM 8966 / VKM B-1809) (Halobacterium marismortui).